Consider the following 505-residue polypeptide: Aminoaldehyde dehydrogenase 1a (505 aa).

Position 101 (D101) interacts with Na(+). NAD(+) is bound by residues 161–163 (TPW) and 187–190 (KPSE). Residue L191 coordinates Na(+). NAD(+)-binding positions include 241–244 (SFET) and E262. E262 (proton acceptor) is an active-site residue. The active-site Nucleophile is the C296. The NAD(+) site is built by E395 and W461.

This sequence belongs to the aldehyde dehydrogenase family. As to quaternary structure, forms homodimers.

The catalysed reaction is 4-aminobutanal + NAD(+) + H2O = 4-aminobutanoate + NADH + 2 H(+). It carries out the reaction 3-aminopropanal + NAD(+) + H2O = beta-alanine + NADH + 2 H(+). The enzyme catalyses 4-(trimethylamino)butanal + NAD(+) + H2O = 4-(trimethylamino)butanoate + NADH + 2 H(+). It catalyses the reaction 4-guanidinobutanal + NAD(+) + H2O = 4-guanidinobutanoate + NADH + 2 H(+). The catalysed reaction is betaine aldehyde + NAD(+) + H2O = glycine betaine + NADH + 2 H(+). It participates in amine and polyamine biosynthesis; betaine biosynthesis via choline pathway; betaine from betaine aldehyde: step 1/1. In terms of biological role, dehydrogenase that catalyzes the oxidation of several aminoaldehydes. Metabolizes and detoxifies aldehyde products of polyamine degradation to non-toxic amino acids. Catalyzes the oxidation of 4-aminobutanal and 3-aminopropanal to 4-aminobutanoate and beta-alanine, respectively. Catalyzes the oxidation of 4-(trimethylamino)butanal and 4-guanidinobutanal to 4-trimethylammoniobutanoate and 4-guanidinobutanoate, respectively. Catalyzes the oxidation of betaine aldehyde to glycine betaine. Dehydrogenase that catalyzes the oxidation of several aminoaldehydes. Catalyzes the oxidation of betaine aldehyde to glycine betaine. Catalyzes the oxidation of 4-(trimethylamino)butanal to 4-trimethylammoniobutanoate. This is Aminoaldehyde dehydrogenase 1a from Zea mays (Maize).